We begin with the raw amino-acid sequence, 296 residues long: Small ribosomal subunit biogenesis GTPase RsgA (296 aa).

The region spanning 65–226 (TNELIRPPIS…VADTPGFSSL (162 aa)) is the CP-type G domain. GTP-binding positions include 114–117 (TKMD) and 169–177 (GQSGVGKSS). Zn(2+)-binding residues include cysteine 250, cysteine 255, histidine 257, and cysteine 263.

It belongs to the TRAFAC class YlqF/YawG GTPase family. RsgA subfamily. As to quaternary structure, monomer. Associates with 30S ribosomal subunit, binds 16S rRNA. Zn(2+) serves as cofactor.

Its subcellular location is the cytoplasm. Functionally, one of several proteins that assist in the late maturation steps of the functional core of the 30S ribosomal subunit. Helps release RbfA from mature subunits. May play a role in the assembly of ribosomal proteins into the subunit. Circularly permuted GTPase that catalyzes slow GTP hydrolysis, GTPase activity is stimulated by the 30S ribosomal subunit. The chain is Small ribosomal subunit biogenesis GTPase RsgA from Bacillus velezensis (strain DSM 23117 / BGSC 10A6 / LMG 26770 / FZB42) (Bacillus amyloliquefaciens subsp. plantarum).